We begin with the raw amino-acid sequence, 417 residues long: Lipoyl synthase, mitochondrial (417 aa).

Residues 1–26 constitute a mitochondrion transit peptide; that stretch reads MAVCARGLRCLGTPAVSLRLAASRSY. The disordered stretch occupies residues 27 to 61; sequence ATTTPPDPAIPNTPGAAATSSPAKRPRTSFQDKLN. Polar residues predominate over residues 44-58; it reads ATSSPAKRPRTSFQD. The [4Fe-4S] cluster site is built by Cys-134, Cys-139, Cys-145, Cys-165, Cys-169, Cys-172, and Ser-380. The region spanning 148–369 is the Radical SAM core domain; the sequence is GGSKSAATAT…KEKALEMGFL (222 aa). Residues 398–417 form a disordered region; it reads ESTGPGSASVQDVATGDLVR.

This sequence belongs to the radical SAM superfamily. Lipoyl synthase family. [4Fe-4S] cluster serves as cofactor.

The protein resides in the mitochondrion. The enzyme catalyses [[Fe-S] cluster scaffold protein carrying a second [4Fe-4S](2+) cluster] + N(6)-octanoyl-L-lysyl-[protein] + 2 oxidized [2Fe-2S]-[ferredoxin] + 2 S-adenosyl-L-methionine + 4 H(+) = [[Fe-S] cluster scaffold protein] + N(6)-[(R)-dihydrolipoyl]-L-lysyl-[protein] + 4 Fe(3+) + 2 hydrogen sulfide + 2 5'-deoxyadenosine + 2 L-methionine + 2 reduced [2Fe-2S]-[ferredoxin]. Its pathway is protein modification; protein lipoylation via endogenous pathway; protein N(6)-(lipoyl)lysine from octanoyl-[acyl-carrier-protein]: step 2/2. Catalyzes the radical-mediated insertion of two sulfur atoms into the C-6 and C-8 positions of the octanoyl moiety bound to the lipoyl domains of lipoate-dependent enzymes, thereby converting the octanoylated domains into lipoylated derivatives. The polypeptide is Lipoyl synthase, mitochondrial (Uncinocarpus reesii (strain UAMH 1704)).